Here is a 477-residue protein sequence, read N- to C-terminus: Lactate utilization protein B (477 aa).

4Fe-4S ferredoxin-type domains follow at residues 304–334 (GTEF…GHSY) and 353–382 (YDDY…LHEL). The [4Fe-4S] cluster site is built by Cys-313, Cys-316, Cys-319, Cys-323, Cys-366, Cys-369, and Cys-373. The segment at 433 to 477 (KEDGKITKGPGPLKQWTQIRDFPAPNKSRFRDWFEDRRKEKGEDK) is disordered. Residues 461–477 (RFRDWFEDRRKEKGEDK) are compositionally biased toward basic and acidic residues.

Belongs to the LutB/YkgF family.

In terms of biological role, is involved in L-lactate degradation and allows cells to grow with lactate as the sole carbon source. Has probably a role as an electron transporter during oxidation of L-lactate. In Bacillus licheniformis (strain ATCC 14580 / DSM 13 / JCM 2505 / CCUG 7422 / NBRC 12200 / NCIMB 9375 / NCTC 10341 / NRRL NRS-1264 / Gibson 46), this protein is Lactate utilization protein B.